We begin with the raw amino-acid sequence, 200 residues long: Alpha-amylase/subtilisin inhibitor (200 aa).

Residues 1-22 (MVSLRLPLILLSLLAISFSCSA) form the signal peptide. 2 disulfide bridges follow: Cys63-Cys112 and Cys162-Cys166.

The protein belongs to the protease inhibitor I3 (leguminous Kunitz-type inhibitor) family.

Functionally, this protein inhibits independently subtilisin and T.castaneum alpha-amylase but not barley alpha-amylase. The sequence is that of Alpha-amylase/subtilisin inhibitor (RASI) from Oryza sativa subsp. japonica (Rice).